The chain runs to 372 residues: Citrate/2-methylcitrate synthase (372 aa).

His-188 lines the substrate pocket. The active site involves His-223. Lys-256–Phe-260 contributes to the CoA binding site. His-262 is a catalytic residue. Arg-272 contacts substrate. Asp-314 is an active-site residue. Positions 339 and 358 each coordinate substrate.

It belongs to the citrate synthase family.

It carries out the reaction propanoyl-CoA + oxaloacetate + H2O = 2-methylcitrate + CoA + H(+). The enzyme catalyses oxaloacetate + acetyl-CoA + H2O = citrate + CoA + H(+). It participates in carbohydrate metabolism; tricarboxylic acid cycle; isocitrate from oxaloacetate: step 1/2. Involved in both the tricarboxylic acid (TCA) and methylcitric acid cycles. Has both 2-methylcitrate synthase and citrate synthase activities. Catalyzes the condensation of propionyl-CoA and oxaloacetate to yield 2-methylcitrate (2-MC) and CoA, and the condensation of acetyl-CoA and oxaloacetate to yield citrate and CoA. Has 2.3-fold higher activity as a 2-methylcitrate synthase. Catalyzes the formation of either (2S,3R)- or (2R,3S)-2-methylcitrate. The chain is Citrate/2-methylcitrate synthase from Bacillus subtilis (strain 168).